The following is a 256-amino-acid chain: tRNA (guanine-N(1)-)-methyltransferase (256 aa).

S-adenosyl-L-methionine-binding positions include Gly-117 and 137–142 (LGDFVL).

This sequence belongs to the RNA methyltransferase TrmD family. In terms of assembly, homodimer.

It is found in the cytoplasm. It carries out the reaction guanosine(37) in tRNA + S-adenosyl-L-methionine = N(1)-methylguanosine(37) in tRNA + S-adenosyl-L-homocysteine + H(+). Specifically methylates guanosine-37 in various tRNAs. The protein is tRNA (guanine-N(1)-)-methyltransferase of Methylibium petroleiphilum (strain ATCC BAA-1232 / LMG 22953 / PM1).